Reading from the N-terminus, the 68-residue chain is MMSKLGVLVTICLLLFPLTALPLDGDQPADHPAKRTQDHNLASPISAWIDPSHYCCCGGGCTDDCVNC.

The N-terminal stretch at M1–A20 is a signal peptide. The propeptide occupies L21–A47. 3 disulfide bridges follow: C55–C68, C56–C61, and C57–C65.

The protein belongs to the conotoxin M superfamily. In terms of tissue distribution, expressed by the venom duct.

It localises to the secreted. Its function is as follows. In vivo, elicits a series of symptoms, such as being sedative, tail stiffening and twisted jumping, when injected intracranially into mice. The polypeptide is Conotoxin Vx2 (Conus vexillum (Flag cone)).